A 623-amino-acid chain; its full sequence is Transketolase (623 aa).

M1 carries the post-translational modification N-acetylmethionine. 2 positions are modified to N6-acetyllysine: K6 and K11. H37 contributes to the substrate binding site. Residues S40 and H77 each contribute to the thiamine diphosphate site. The residue at position 104 (S104) is a Phosphoserine. Position 123 to 125 (123 to 125 (GSL)) interacts with thiamine diphosphate. Residue K144 is modified to N6-acetyllysine. D155 is a Mg(2+) binding site. Thiamine diphosphate contacts are provided by G156 and N185. The Mg(2+) site is built by N185 and L187. K204, K232, and K241 each carry N6-acetyllysine. 2 residues coordinate thiamine diphosphate: K244 and H258. Residue H258 participates in substrate binding. N6-acetyllysine is present on K260. Y275 carries the phosphotyrosine modification. T287 is subject to Phosphothreonine. S295 is subject to Phosphoserine. Substrate-binding residues include R318 and S345. S345 is modified (phosphoserine). A Glycyl lysine isopeptide (Lys-Gly) (interchain with G-Cter in SUMO2) cross-link involves residue K352. Residue E366 is the Proton donor of the active site. F392 contacts thiamine diphosphate. Residues H416 and D424 each coordinate substrate. Thiamine diphosphate is bound at residue Q428. R474 contributes to the substrate binding site. An N6-acetyllysine mark is found at K538 and K603.

This sequence belongs to the transketolase family. As to quaternary structure, homodimer. The cofactor is Mg(2+). Requires Ca(2+) as cofactor. Mn(2+) is required as a cofactor. Co(2+) serves as cofactor. It depends on thiamine diphosphate as a cofactor.

It carries out the reaction D-sedoheptulose 7-phosphate + D-glyceraldehyde 3-phosphate = aldehydo-D-ribose 5-phosphate + D-xylulose 5-phosphate. Functionally, catalyzes the transfer of a two-carbon ketol group from a ketose donor to an aldose acceptor, via a covalent intermediate with the cofactor thiamine pyrophosphate. This chain is Transketolase (Tkt), found in Rattus norvegicus (Rat).